The following is a 1863-amino-acid chain: C-myc promoter-binding protein (1863 aa).

One can recognise an MABP domain in the interval 42-200; it reads KEPITDVSVI…AVYLCYKKSV (159 aa). The region spanning 192–364 is the uDENN domain; the sequence is VYLCYKKSVA…KVPFPSPQRP (173 aa). The cDENN domain occupies 385–521; that stretch reads PLPLSGGKFS…PCKNLMNTLN (137 aa). The 119-residue stretch at 523-641 folds into the dDENN domain; that stretch reads LHQQLAKLQQ…CSFVSDKDAS (119 aa). Serine 731 carries the post-translational modification Phosphoserine. 2 PPR repeats span residues 772 to 808 and 809 to 843; these read WFIC…MDPP and DEVC…GIDP. The tract at residues 905–952 is disordered; it reads DLGYNSLSKDEVRRGDTSTEDIQEEKDKKGSDCSSLSESESTKGSADC. Residues 912-921 are compositionally biased toward basic and acidic residues; it reads SKDEVRRGDT. The Bipartite nuclear localization signal signature appears at 917 to 933; sequence RRGDTSTEDIQEEKDKK. The span at 936-949 shows a compositional bias: low complexity; that stretch reads DCSSLSESESTKGS. Phosphoserine is present on residues serine 1015, serine 1035, serine 1099, serine 1151, and serine 1152. The interval 1075 to 1111 is disordered; that stretch reads TRPNTLDIGKPPLRSKRDSLEKESSDDDTPFDGSNYL. Residues 1177–1202 form a disordered region; sequence TEQQQKEEEEEDEDDSKSISTPSARR. Phosphoserine occurs at positions 1225, 1240, and 1251. Disordered regions lie at residues 1237-1306 and 1348-1375; these read NKKS…SPSF and SKDQ…TDED. Positions 1269-1279 are enriched in basic and acidic residues; sequence TKSEEKPRDRL. Phosphoserine is present on serine 1281. Polar residues-rich tracts occupy residues 1297–1306 and 1348–1371; these read DTLTHSSPSF and SKDQ…STSL. Residues serine 1508, serine 1587, serine 1589, and serine 1591 each carry the phosphoserine modification.

As to expression, expressed ubiquitously. Highest expression in bone marrow, medium in peripheral blood lymphocytes and lowest in spleen. In brain, breast, and prostate, higher expression was seen in normal cells than in tumor cells. Expression is regulated in a growth- and cell cycle-dependent manner.

The protein resides in the nucleus. In terms of biological role, probable guanine nucleotide exchange factor (GEF) which may activate RAB10. Promotes the exchange of GDP to GTP, converting inactive GDP-bound Rab proteins into their active GTP-bound form. According to PubMed:8056341, it may bind to ISRE-like element (interferon-stimulated response element) of MYC P2 promoter. The sequence is that of C-myc promoter-binding protein (DENND4A) from Homo sapiens (Human).